The primary structure comprises 238 residues: MTQPRQALLDAFGVDLPDELLSLALTHRSYAYEHGGLPTNERLEFLGDAVLSLTITDELFHRHPDRSEGDLAKLRASVVNTQALAYVARNLSDGGLGVYLLLGRGETNTGGADKSSILADGMESLLGAIYLHHGIEVARQVILRLFGTLLDAAPTLGAGLDWKTSLQELTAARGMGVPSYVVTSTGPDHDKEFTAVVVVMDTEYGSGIGHSKKEAEQKAASAAWKALDVLGGVGKTSV.

The RNase III domain maps to 4–134 (PRQALLDAFG…LLGAIYLHHG (131 aa)). Residue Glu44 coordinates Mg(2+). Asp48 is an active-site residue. Mg(2+) contacts are provided by Asp120 and Glu123. The active site involves Glu123. Positions 161–229 (DWKTSLQELT…ASAAWKALDV (69 aa)) constitute a DRBM domain.

Belongs to the ribonuclease III family. Homodimer. Mg(2+) is required as a cofactor.

Its subcellular location is the cytoplasm. It catalyses the reaction Endonucleolytic cleavage to 5'-phosphomonoester.. Its function is as follows. Digests double-stranded RNA. Involved in the processing of primary rRNA transcript to yield the immediate precursors to the large and small rRNAs (23S and 16S). Processes some mRNAs, and tRNAs when they are encoded in the rRNA operon. Processes pre-crRNA and tracrRNA of type II CRISPR loci if present in the organism. The sequence is that of Ribonuclease 3 from Mycobacterium leprae (strain TN).